The following is a 121-amino-acid chain: Phosphoribosyl-ATP pyrophosphatase (121 aa).

It belongs to the PRA-PH family.

It is found in the cytoplasm. It carries out the reaction 1-(5-phospho-beta-D-ribosyl)-ATP + H2O = 1-(5-phospho-beta-D-ribosyl)-5'-AMP + diphosphate + H(+). It participates in amino-acid biosynthesis; L-histidine biosynthesis; L-histidine from 5-phospho-alpha-D-ribose 1-diphosphate: step 2/9. This is Phosphoribosyl-ATP pyrophosphatase from Burkholderia vietnamiensis (strain G4 / LMG 22486) (Burkholderia cepacia (strain R1808)).